The primary structure comprises 396 residues: 1-deoxy-D-xylulose 5-phosphate reductoisomerase (396 aa).

Positions 10, 11, 12, 13, and 123 each coordinate NADPH. Residue Lys124 coordinates 1-deoxy-D-xylulose 5-phosphate. Glu125 provides a ligand contact to NADPH. A Mn(2+)-binding site is contributed by Asp149. Residues Ser150, Glu151, Ser185, and His208 each contribute to the 1-deoxy-D-xylulose 5-phosphate site. Residue Glu151 participates in Mn(2+) binding. Gly214 is a binding site for NADPH. 1-deoxy-D-xylulose 5-phosphate-binding residues include Ser221, Asn226, Lys227, and Glu230. Residue Glu230 participates in Mn(2+) binding.

Belongs to the DXR family. Requires Mg(2+) as cofactor. The cofactor is Mn(2+).

The catalysed reaction is 2-C-methyl-D-erythritol 4-phosphate + NADP(+) = 1-deoxy-D-xylulose 5-phosphate + NADPH + H(+). It participates in isoprenoid biosynthesis; isopentenyl diphosphate biosynthesis via DXP pathway; isopentenyl diphosphate from 1-deoxy-D-xylulose 5-phosphate: step 1/6. In terms of biological role, catalyzes the NADPH-dependent rearrangement and reduction of 1-deoxy-D-xylulose-5-phosphate (DXP) to 2-C-methyl-D-erythritol 4-phosphate (MEP). In Shewanella sp. (strain ANA-3), this protein is 1-deoxy-D-xylulose 5-phosphate reductoisomerase.